Consider the following 361-residue polypeptide: MSGNTIGTLFTLTSFGESHGPAIGGVVDGCPPGLELSVEDIQQELDRRKPGTSRHVTQRKEPDTVEILSGVFEGRTTGTPIGLLIRNQDQRSQDYGKIAETFRPGHADYTYWQKYGIRDYRGGGRSSARETAVRVAAGAIAKKWLKQRYGVTIRGCMSQLGDIQIPFESWDAVSRNAFFAPNETILPELEAYLDRIRSERDSVGAKITVVAEGVPVGWGEPVYDRLDADIAHAMMGINAAKGVEIGDGFASVAQRGSVHGDELTPQGFASNHAGGILGGISSGQDIIAHVAFKPTSSIPQLRHSIDKHGAALEMQTTGRHDPCVGVRATPIVEAMMALVLMDHALRHRAQNADVSVDTVKR.

Positions 48 and 54 each coordinate NADP(+). Residues 125 to 127 (RSS), 238 to 239 (NA), G278, 293 to 297 (KPTSS), and R319 each bind FMN.

It belongs to the chorismate synthase family. Homotetramer. FMNH2 serves as cofactor.

The catalysed reaction is 5-O-(1-carboxyvinyl)-3-phosphoshikimate = chorismate + phosphate. It functions in the pathway metabolic intermediate biosynthesis; chorismate biosynthesis; chorismate from D-erythrose 4-phosphate and phosphoenolpyruvate: step 7/7. In terms of biological role, catalyzes the anti-1,4-elimination of the C-3 phosphate and the C-6 proR hydrogen from 5-enolpyruvylshikimate-3-phosphate (EPSP) to yield chorismate, which is the branch point compound that serves as the starting substrate for the three terminal pathways of aromatic amino acid biosynthesis. This reaction introduces a second double bond into the aromatic ring system. The chain is Chorismate synthase from Methylobacillus flagellatus (strain ATCC 51484 / DSM 6875 / VKM B-1610 / KT).